A 707-amino-acid chain; its full sequence is DNA topoisomerase 1 (707 aa).

Residues 1-140 (MYAILAEKPS…IKRLWTSSMT (140 aa)) form the Toprim domain. The Topo IA-type catalytic domain occupies 157–596 (TLPLYYQAKA…HSKKLSSVLF (440 aa)). Positions 199 to 204 (SLGRVQ) are interaction with DNA. Y323 functions as the O-(5'-phospho-DNA)-tyrosine intermediate in the catalytic mechanism.

It belongs to the type IA topoisomerase family. As to quaternary structure, monomer.

It carries out the reaction ATP-independent breakage of single-stranded DNA, followed by passage and rejoining.. Functionally, releases the supercoiling and torsional tension of DNA, which is introduced during the DNA replication and transcription, by transiently cleaving and rejoining one strand of the DNA duplex. Introduces a single-strand break via transesterification at a target site in duplex DNA. The scissile phosphodiester is attacked by the catalytic tyrosine of the enzyme, resulting in the formation of a DNA-(5'-phosphotyrosyl)-enzyme intermediate and the expulsion of a 3'-OH DNA strand. The free DNA strand then undergoes passage around the unbroken strand, thus removing DNA supercoils. Finally, in the religation step, the DNA 3'-OH attacks the covalent intermediate to expel the active-site tyrosine and restore the DNA phosphodiester backbone. The polypeptide is DNA topoisomerase 1 (topA) (Alkalihalophilus pseudofirmus (strain ATCC BAA-2126 / JCM 17055 / OF4) (Bacillus pseudofirmus)).